A 515-amino-acid chain; its full sequence is Low affinity ammonium transporter (515 aa).

Over 1–78 (MSTSSSVTQK…IIGNSFGTTN (78 aa)) the chain is Extracellular. Residues 79–99 (AGQLSWFASAYSLTVGTFILI) traverse the membrane as a helical segment. The Cytoplasmic portion of the chain corresponds to 100 to 111 (AGRLGDIFGHKK). A helical transmembrane segment spans residues 112–132 (FFVLGFFWYALWSLLAGFSVY). Over 133–140 (SNQIFFDC) the chain is Extracellular. The chain crosses the membrane as a helical span at residues 141–161 (CRAFQGMGPAFLLPNAIAILG). Residues 162 to 171 (RTYKPGRRKN) are Cytoplasmic-facing. A helical transmembrane segment spans residues 172–192 (MVFSLFGASAPGGFFLGAVFS). Residues 193-202 (SMLGQLAWWP) lie on the Extracellular side of the membrane. Residues 203–223 (WAYWIMGIACFVLAVAGYFVI) form a helical membrane-spanning segment. Topologically, residues 224 to 241 (PHTPMPSRDASSFKLLER) are cytoplasmic. Residues 242-262 (IDFAGSVTGVVGLILFNFAWN) traverse the membrane as a helical segment. Residues 263 to 270 (QGPVVGWQ) are Extracellular-facing. The helical transmembrane segment at 271–291 (TPYTYALLIVGTFFLVIFAYI) threads the bilayer. At 292–310 (ESRAAFPLLPFAALSSDTA) the chain is on the cytoplasmic side. A helical membrane pass occupies residues 311-331 (FVLSCIAAGWASFGIWIFYTW). At 332–346 (QFMEDSRGQTPLLSS) the chain is on the extracellular side. Residues 347–367 (AQFSPVAISGFCAAVTTGFLL) form a helical membrane-spanning segment. Over 368-374 (SHTPPST) the chain is Cytoplasmic. The helical transmembrane segment at 375–395 (VMLFAMTAFTVGTILIATAPV) threads the bilayer. Residues 396 to 403 (HQTYWAQT) are Extracellular-facing. A helical transmembrane segment spans residues 404 to 424 (FVSIIVMPWGMDMSFPAATIM). The Cytoplasmic portion of the chain corresponds to 425-435 (LSDSMPHEHQG). Residues 436 to 456 (LAASLVNTVVNYSISIGLGIA) form a helical membrane-spanning segment. Over 457–479 (GTIESRVNDGGAKPLKGYRCSWY) the chain is Extracellular. The helical transmembrane segment at 480–500 (MGIGLSGLGIFVAATYAWSTF) threads the bilayer. The Cytoplasmic portion of the chain corresponds to 501 to 515 (MKSKKRISEKQHFIE).

This sequence belongs to the major facilitator superfamily.

Its subcellular location is the cell membrane. Low affinity ammonium transporter of the plasma membrane. May be involved in drug resistance through pumping them out of the cell. The protein is Low affinity ammonium transporter of Saccharomyces cerevisiae (strain ATCC 204508 / S288c) (Baker's yeast).